The sequence spans 340 residues: Glutamyl-tRNA reductase (340 aa).

Substrate is bound by residues 49–52 (TCNR), S108, 113–115 (ETE), and Q119. Residue C50 is the Nucleophile of the active site. 188 to 193 (GAGEMS) is a binding site for NADP(+).

Belongs to the glutamyl-tRNA reductase family. In terms of assembly, homodimer.

It carries out the reaction (S)-4-amino-5-oxopentanoate + tRNA(Glu) + NADP(+) = L-glutamyl-tRNA(Glu) + NADPH + H(+). Its pathway is porphyrin-containing compound metabolism; protoporphyrin-IX biosynthesis; 5-aminolevulinate from L-glutamyl-tRNA(Glu): step 1/2. Functionally, catalyzes the NADPH-dependent reduction of glutamyl-tRNA(Glu) to glutamate 1-semialdehyde (GSA). In Akkermansia muciniphila (strain ATCC BAA-835 / DSM 22959 / JCM 33894 / BCRC 81048 / CCUG 64013 / CIP 107961 / Muc), this protein is Glutamyl-tRNA reductase.